Here is a 531-residue protein sequence, read N- to C-terminus: Peptide chain release factor 3 (531 aa).

The 269-residue stretch at 10–278 folds into the tr-type G domain; sequence RRRRTFAIIS…SLIDWAPAPK (269 aa). GTP contacts are provided by residues 19–26, 87–91, and 141–144; these read SHPDAGKT, DTPGH, and NKYD.

This sequence belongs to the TRAFAC class translation factor GTPase superfamily. Classic translation factor GTPase family. PrfC subfamily.

It localises to the cytoplasm. Its function is as follows. Increases the formation of ribosomal termination complexes and stimulates activities of RF-1 and RF-2. It binds guanine nucleotides and has strong preference for UGA stop codons. It may interact directly with the ribosome. The stimulation of RF-1 and RF-2 is significantly reduced by GTP and GDP, but not by GMP. This Neisseria gonorrhoeae (strain ATCC 700825 / FA 1090) protein is Peptide chain release factor 3.